A 989-amino-acid polypeptide reads, in one-letter code: AP-2 complex subunit alpha-2 (989 aa).

HEAT repeat units follow at residues 112–149 (EMLP…KEVA), 188–225 (VTPD…ENPI), 368–402 (IMIK…MCDK), and 403–440 (NTCK…KFAS). The disordered stretch occupies residues 610 to 745 (DNSNTTSNTA…SSSPISSGGS (136 aa)). Low complexity predominate over residues 611–623 (NSNTTSNTANNSN). Polar residues predominate over residues 624-638 (MINSQDSKISSGGFN). A compositionally biased stretch (low complexity) spans 639–703 (QSPQPSQQQQ…QPVYQQQQQA (65 aa)). Positions 704 to 714 (ESFSPVQSDTV) are enriched in polar residues. Low complexity predominate over residues 715–745 (SSFGQQQQQQQGGFSSPTIQASSSPISSGGS).

It belongs to the adaptor complexes large subunit family. Adaptor protein complex 2 (AP-2) is a heterotetramer composed of two large adaptins (alpha-type and beta-type subunits), a medium adaptin (mu-type subunit AP50) and a small adaptin (sigma-type subunit AP17).

It localises to the cell membrane. It is found in the membrane. The protein resides in the coated pit. Its function is as follows. Component of the adaptor complexes which link clathrin to receptors in coated vesicles. Clathrin-associated protein complexes are believed to interact with the cytoplasmic tails of membrane proteins, leading to their selection and concentration. The chain is AP-2 complex subunit alpha-2 (ap2a1-1) from Dictyostelium discoideum (Social amoeba).